The chain runs to 736 residues: Prolyl 3-hydroxylase 3 (736 aa).

An N-terminal signal peptide occupies residues 1-20 (MLRLLRPLLLLLLLPPPGSP). TPR repeat units follow at residues 37–70 (PDLLYADGLRAYAAGAWAPAVALLREALRSQAAL), 154–187 (REPYNYLQRAYYQLKKLDLAAAAAHTFFVANPMH), and 216–249 (HWAAYDTGLELLGRQEAGLALPRLEEALQGSLAQ). A disordered region spans residues 253–275 (CRADCEGPEEQQGAEEEEDGAAS). The segment covering 258 to 272 (EGPEEQQGAEEEEDG) has biased composition (acidic residues). A TPR 4 repeat occupies 316-349 (PNQLRRLHEAHAQVGNLSQAIENVLSVLLFYPED). N331 and N462 each carry an N-linked (GlcNAc...) asparagine glycan. The 115-residue stretch at 561-675 (THLVCRSAIE…RCALALWHTW (115 aa)) folds into the Fe2OG dioxygenase domain. Fe cation contacts are provided by H584, D586, and H656. Residue R666 is part of the active site. Positions 681-709 (EQEWIEAKELLQESQEEEEEEEEEMPSKD) form a coiled coil. A disordered region spans residues 689–736 (ELLQESQEEEEEEEEEMPSKDPSPEPPSRRHQRVQDKTGRAPRVREEL). Positions 694–704 (SQEEEEEEEEE) are enriched in acidic residues. A compositionally biased stretch (basic and acidic residues) spans 721–736 (RVQDKTGRAPRVREEL). Residues 733 to 736 (REEL) carry the Prevents secretion from ER motif.

The protein belongs to the leprecan family. Identified in a complex with PLOD1 and P3H4. Fe cation is required as a cofactor. The cofactor is L-ascorbate. As to expression, detected in fetal cartilage (at protein level). Weak expression in heart, lung, ovary and skeletal muscle.

It localises to the endoplasmic reticulum. It carries out the reaction L-prolyl-[collagen] + 2-oxoglutarate + O2 = trans-3-hydroxy-L-prolyl-[collagen] + succinate + CO2. Functionally, part of a complex composed of PLOD1, P3H3 and P3H4 that catalyzes hydroxylation of lysine residues in collagen alpha chains and is required for normal assembly and cross-linkling of collagen fibrils. Required for normal hydroxylation of lysine residues in type I collagen chains in skin, bone, tendon, aorta and cornea. Required for normal skin stability via its role in hydroxylation of lysine residues in collagen alpha chains and in collagen fibril assembly. Apparently not required for normal prolyl 3-hydroxylation on collagen chains, possibly because it functions redundantly with other prolyl 3-hydroxylases. In Homo sapiens (Human), this protein is Prolyl 3-hydroxylase 3.